We begin with the raw amino-acid sequence, 137 residues long: Large ribosomal subunit protein eL28 (137 aa).

S2 carries the N-acetylserine modification. Glycyl lysine isopeptide (Lys-Gly) (interchain with G-Cter in SUMO2) cross-links involve residues K58 and K65. Residue S115 is modified to Phosphoserine.

The protein belongs to the eukaryotic ribosomal protein eL28 family. As to quaternary structure, component of the large ribosomal subunit.

It localises to the cytoplasm. In terms of biological role, component of the large ribosomal subunit. The ribosome is a large ribonucleoprotein complex responsible for the synthesis of proteins in the cell. This is Large ribosomal subunit protein eL28 (Rpl28) from Mus musculus (Mouse).